The chain runs to 150 residues: Large ribosomal subunit protein bL9 (150 aa).

It belongs to the bacterial ribosomal protein bL9 family.

Functionally, binds to the 23S rRNA. In Baumannia cicadellinicola subsp. Homalodisca coagulata, this protein is Large ribosomal subunit protein bL9.